Reading from the N-terminus, the 172-residue chain is DNA-directed RNA polymerase II subunit RPB7 (172 aa).

It belongs to the eukaryotic RPB7/RPC8 RNA polymerase subunit family. Component of the RNA polymerase II (Pol II) core complex consisting of 12 subunits: a ten-subunit catalytic core composed of POLR2A/RPB1, POLR2B/RPB2, POLR2C/RPB3, POLR2I/RPB9, POLR2J/RPB11, POLR2E/RPABC1, POLR2F/RPABC2, POLR2H/RPABC3, POLR2K/RPABC4 and POLR2L/RPABC5 and a mobile stalk composed of two subunits POLR2D/RPB4 and POLR2G/RPB7, protruding from the core and functioning primarily in transcription initiation. Part of Pol II(G) complex, in which Pol II core associates with an additional subunit POLR2M; unlike conventional Pol II, Pol II(G) functions as a transcriptional repressor. Part of TBP-based Pol II pre-initiation complex (PIC), in which Pol II core assembles with general transcription factors and other specific initiation factors including GTF2E1, GTF2E2, GTF2F1, GTF2F2, TCEA1, ERCC2, ERCC3, GTF2H2, GTF2H3, GTF2H4, GTF2H5, GTF2A1, GTF2A2, GTF2B and TBP; this large multi-subunit PIC complex mediates DNA unwinding and targets Pol II core to the transcription start site where the first phosphodiester bond forms.

It is found in the nucleus. Its function is as follows. Core component of RNA polymerase II (Pol II), a DNA-dependent RNA polymerase which synthesizes mRNA precursors and many functional non-coding RNAs using the four ribonucleoside triphosphates as substrates. Pol II is the central component of the basal RNA polymerase II transcription machinery. It is composed of mobile elements that move relative to each other. POLR2G/RPB7 is part of a subcomplex with POLR2D/RPB4 that binds to a pocket formed by POLR2A/RPB1, POLR2B/RPB2 and POLR2F/RPABC2 at the base of the clamp element. The POLR2D/RPB4-POLR2G/RPB7 subcomplex seems to lock the clamp via POLR2G/RPB7 in the closed conformation thus preventing double-stranded DNA to enter the active site cleft. The POLR2D/RPB4-POLR2G/RPB7 subcomplex binds single-stranded DNA and RNA. The protein is DNA-directed RNA polymerase II subunit RPB7 (POLR2G) of Bos taurus (Bovine).